A 401-amino-acid polypeptide reads, in one-letter code: Aspartokinase (401 aa).

Belongs to the aspartokinase family.

It carries out the reaction L-aspartate + ATP = 4-phospho-L-aspartate + ADP. It participates in amino-acid biosynthesis; L-lysine biosynthesis via DAP pathway; (S)-tetrahydrodipicolinate from L-aspartate: step 1/4. Its pathway is amino-acid biosynthesis; L-methionine biosynthesis via de novo pathway; L-homoserine from L-aspartate: step 1/3. The protein operates within amino-acid biosynthesis; L-threonine biosynthesis; L-threonine from L-aspartate: step 1/5. This is Aspartokinase (lysC) from Rickettsia felis (strain ATCC VR-1525 / URRWXCal2) (Rickettsia azadi).